The sequence spans 461 residues: Cysteine--tRNA ligase (461 aa).

Cysteine 28 provides a ligand contact to Zn(2+). The 'HIGH' region motif lies at 30–40 (ITVYDLCHIGH). Zn(2+) is bound by residues cysteine 209, histidine 234, and glutamate 238. The short motif at 266–270 (KMSKS) is the 'KMSKS' region element. Lysine 269 lines the ATP pocket.

The protein belongs to the class-I aminoacyl-tRNA synthetase family. In terms of assembly, monomer. It depends on Zn(2+) as a cofactor.

It is found in the cytoplasm. The catalysed reaction is tRNA(Cys) + L-cysteine + ATP = L-cysteinyl-tRNA(Cys) + AMP + diphosphate. This chain is Cysteine--tRNA ligase, found in Klebsiella pneumoniae (strain 342).